Here is a 351-residue protein sequence, read N- to C-terminus: Amylovoran biosynthesis glycosyltransferase AmsD (351 aa).

The protein belongs to the glycosyltransferase group 1 family. Glycosyltransferase 4 subfamily.

It participates in glycan metabolism; exopolysaccharide biosynthesis. In terms of biological role, involved in the biosynthesis of amylovoran which functions as a virulence factor. May be involved in the formation of galactose alpha-1,6 linkages in amylovoran. This chain is Amylovoran biosynthesis glycosyltransferase AmsD (amsD), found in Erwinia amylovora (Fire blight bacteria).